Here is a 238-residue protein sequence, read N- to C-terminus: Uridylate kinase (238 aa).

An ATP-binding site is contributed by 12–15 (KLSG). The involved in allosteric activation by GTP stretch occupies residues 20–25 (GQQGFG). Gly54 provides a ligand contact to UMP. 2 residues coordinate ATP: Gly55 and Arg59. UMP is bound by residues Asp74 and 135 to 142 (TGNPFFTT). Residues Thr162, Asn163, Tyr168, and Asp171 each contribute to the ATP site.

The protein belongs to the UMP kinase family. As to quaternary structure, homohexamer.

Its subcellular location is the cytoplasm. It carries out the reaction UMP + ATP = UDP + ADP. Its pathway is pyrimidine metabolism; CTP biosynthesis via de novo pathway; UDP from UMP (UMPK route): step 1/1. Allosterically activated by GTP. Inhibited by UTP. In terms of biological role, catalyzes the reversible phosphorylation of UMP to UDP. In Bradyrhizobium diazoefficiens (strain JCM 10833 / BCRC 13528 / IAM 13628 / NBRC 14792 / USDA 110), this protein is Uridylate kinase.